A 194-amino-acid polypeptide reads, in one-letter code: Imidazoleglycerol-phosphate dehydratase (194 aa).

Belongs to the imidazoleglycerol-phosphate dehydratase family.

The protein localises to the cytoplasm. The enzyme catalyses D-erythro-1-(imidazol-4-yl)glycerol 3-phosphate = 3-(imidazol-4-yl)-2-oxopropyl phosphate + H2O. It functions in the pathway amino-acid biosynthesis; L-histidine biosynthesis; L-histidine from 5-phospho-alpha-D-ribose 1-diphosphate: step 6/9. The chain is Imidazoleglycerol-phosphate dehydratase from Methanothermobacter thermautotrophicus (strain ATCC 29096 / DSM 1053 / JCM 10044 / NBRC 100330 / Delta H) (Methanobacterium thermoautotrophicum).